A 155-amino-acid chain; its full sequence is 2-C-methyl-D-erythritol 2,4-cyclodiphosphate synthase (155 aa).

A divalent metal cation contacts are provided by Asp-8 and His-10. Residues 8–10 (DVH) and 34–35 (HS) contribute to the 4-CDP-2-C-methyl-D-erythritol 2-phosphate site. His-42 is an a divalent metal cation binding site. 4-CDP-2-C-methyl-D-erythritol 2-phosphate-binding positions include 56 to 58 (DIG), 61 to 65 (FPDSD), 100 to 106 (AQKPKML), 132 to 135 (TTEE), Phe-139, and Lys-142.

It belongs to the IspF family. As to quaternary structure, homotrimer. A divalent metal cation is required as a cofactor.

It carries out the reaction 4-CDP-2-C-methyl-D-erythritol 2-phosphate = 2-C-methyl-D-erythritol 2,4-cyclic diphosphate + CMP. It participates in isoprenoid biosynthesis; isopentenyl diphosphate biosynthesis via DXP pathway; isopentenyl diphosphate from 1-deoxy-D-xylulose 5-phosphate: step 4/6. Involved in the biosynthesis of isopentenyl diphosphate (IPP) and dimethylallyl diphosphate (DMAPP), two major building blocks of isoprenoid compounds. Catalyzes the conversion of 4-diphosphocytidyl-2-C-methyl-D-erythritol 2-phosphate (CDP-ME2P) to 2-C-methyl-D-erythritol 2,4-cyclodiphosphate (ME-CPP) with a corresponding release of cytidine 5-monophosphate (CMP). In Clostridium botulinum (strain Kyoto / Type A2), this protein is 2-C-methyl-D-erythritol 2,4-cyclodiphosphate synthase.